Here is a 333-residue protein sequence, read N- to C-terminus: Glyoxylate reductase (333 aa).

Residues 158–161, 180–182, and 239–241 each bind NADP(+); these read FGRI, SRS, and IAR. Active-site residues include Arg241 and Glu270. The active-site Proton donor is His288. 288 to 290 contributes to the NADP(+) binding site; the sequence is HIG.

Belongs to the D-isomer specific 2-hydroxyacid dehydrogenase family. GyaR subfamily. As to quaternary structure, homodimer.

The protein localises to the cytoplasm. It catalyses the reaction glycolate + NAD(+) = glyoxylate + NADH + H(+). This chain is Glyoxylate reductase, found in Thermococcus kodakarensis (strain ATCC BAA-918 / JCM 12380 / KOD1) (Pyrococcus kodakaraensis (strain KOD1)).